The chain runs to 362 residues: Homeobox-leucine zipper protein HOX11 (362 aa).

Over residues 27-45 (REEAAEAGRRDHEVRRELE) the composition is skewed to basic and acidic residues. Positions 27–179 (REEAAEAGRR…DDGGSARKKL (153 aa)) are disordered. Residues 64 to 75 (LTLLPMVPGLGL) are compositionally biased toward low complexity. Positions 126–135 (LSSSPNNSAG) are enriched in polar residues. A compositionally biased stretch (gly residues) spans 145 to 160 (HGLGGNDAAPGGGGGD). The segment at residues 174 to 233 (SARKKLRLSKEQSAFLEESFKEHSTLNPKQKLALAKQLNLRPRQVEVWFQNRRARTKLKQ) is a DNA-binding region (homeobox). Residues 232–276 (KQTEVDCEYLKRCCETLTEENRRLQKELAELRALKTVHPFYMHLP) form a leucine-zipper region. The interval 301-330 (AATSSTAAPPAAPSSGGIAATSSSAAAAAA) is disordered.

The protein belongs to the HD-ZIP homeobox family. Class II subfamily. In terms of tissue distribution, expressed in stems, leaf sheaths and blades and panicles.

It is found in the nucleus. Functionally, probable transcription factor. The protein is Homeobox-leucine zipper protein HOX11 (HOX11) of Oryza sativa subsp. japonica (Rice).